We begin with the raw amino-acid sequence, 362 residues long: DNA replication and repair protein RecF (362 aa).

Position 30 to 37 (30 to 37 (GLNAQGKS)) interacts with ATP.

This sequence belongs to the RecF family.

It is found in the cytoplasm. The RecF protein is involved in DNA metabolism; it is required for DNA replication and normal SOS inducibility. RecF binds preferentially to single-stranded, linear DNA. It also seems to bind ATP. The polypeptide is DNA replication and repair protein RecF (Thermoanaerobacter sp. (strain X514)).